Reading from the N-terminus, the 354-residue chain is UDP-N-acetylglucosamine--N-acetylmuramyl-(pentapeptide) pyrophosphoryl-undecaprenol N-acetylglucosamine transferase (354 aa).

Residues 15–17 (TGG), asparagine 127, arginine 163, serine 191, isoleucine 244, 263–268 (ALTVSE), and glutamine 288 each bind UDP-N-acetyl-alpha-D-glucosamine.

This sequence belongs to the glycosyltransferase 28 family. MurG subfamily.

The protein localises to the cell inner membrane. The enzyme catalyses di-trans,octa-cis-undecaprenyl diphospho-N-acetyl-alpha-D-muramoyl-L-alanyl-D-glutamyl-meso-2,6-diaminopimeloyl-D-alanyl-D-alanine + UDP-N-acetyl-alpha-D-glucosamine = di-trans,octa-cis-undecaprenyl diphospho-[N-acetyl-alpha-D-glucosaminyl-(1-&gt;4)]-N-acetyl-alpha-D-muramoyl-L-alanyl-D-glutamyl-meso-2,6-diaminopimeloyl-D-alanyl-D-alanine + UDP + H(+). It functions in the pathway cell wall biogenesis; peptidoglycan biosynthesis. Cell wall formation. Catalyzes the transfer of a GlcNAc subunit on undecaprenyl-pyrophosphoryl-MurNAc-pentapeptide (lipid intermediate I) to form undecaprenyl-pyrophosphoryl-MurNAc-(pentapeptide)GlcNAc (lipid intermediate II). The chain is UDP-N-acetylglucosamine--N-acetylmuramyl-(pentapeptide) pyrophosphoryl-undecaprenol N-acetylglucosamine transferase from Aliivibrio fischeri (strain ATCC 700601 / ES114) (Vibrio fischeri).